The chain runs to 264 residues: Undecaprenyl-diphosphatase (264 aa).

The next 7 helical transmembrane spans lie at 38–58 (RSDFFNIVIQAGAIVAVVLVF), 75–95 (REYVFKLGAAFLVTAVVGLVV), 106–126 (VSPVAWALIIGGIWMLLVEAY), 136–156 (VTWTVAIGVGLAQVVAGVFPG), 181–201 (FVFLVGIPTMFAASAYTFLEM), 217–237 (VAFLAAAVTGFVVVKWLMGYI), and 242–262 (FTAFALYRIALGAALLLWLPS).

This sequence belongs to the UppP family.

The protein localises to the cell inner membrane. It catalyses the reaction di-trans,octa-cis-undecaprenyl diphosphate + H2O = di-trans,octa-cis-undecaprenyl phosphate + phosphate + H(+). Catalyzes the dephosphorylation of undecaprenyl diphosphate (UPP). Confers resistance to bacitracin. This is Undecaprenyl-diphosphatase from Stenotrophomonas maltophilia (strain R551-3).